The primary structure comprises 258 residues: Acetylglutamate kinase (258 aa).

Substrate-binding positions include 44–45 (GG), Arg-66, and Asn-158. ATP contacts are provided by residues 181–186 (DVSGIL) and 209–211 (IIT).

The protein belongs to the acetylglutamate kinase family. ArgB subfamily. In terms of assembly, homodimer.

The protein resides in the cytoplasm. It catalyses the reaction N-acetyl-L-glutamate + ATP = N-acetyl-L-glutamyl 5-phosphate + ADP. The protein operates within amino-acid biosynthesis; L-arginine biosynthesis; N(2)-acetyl-L-ornithine from L-glutamate: step 2/4. In terms of biological role, catalyzes the ATP-dependent phosphorylation of N-acetyl-L-glutamate. This is Acetylglutamate kinase from Klebsiella pneumoniae subsp. pneumoniae (strain ATCC 700721 / MGH 78578).